We begin with the raw amino-acid sequence, 267 residues long: 3-methyl-2-oxobutanoate hydroxymethyltransferase (267 aa).

Mg(2+) contacts are provided by Asp46 and Asp85. 3-methyl-2-oxobutanoate contacts are provided by residues 46 to 47, Asp85, and Lys115; that span reads DS. A Mg(2+)-binding site is contributed by Glu117. Glu184 functions as the Proton acceptor in the catalytic mechanism.

Belongs to the PanB family. In terms of assembly, homodecamer; pentamer of dimers. Requires Mg(2+) as cofactor.

The protein localises to the cytoplasm. It catalyses the reaction 3-methyl-2-oxobutanoate + (6R)-5,10-methylene-5,6,7,8-tetrahydrofolate + H2O = 2-dehydropantoate + (6S)-5,6,7,8-tetrahydrofolate. It functions in the pathway cofactor biosynthesis; (R)-pantothenate biosynthesis; (R)-pantoate from 3-methyl-2-oxobutanoate: step 1/2. Catalyzes the reversible reaction in which hydroxymethyl group from 5,10-methylenetetrahydrofolate is transferred onto alpha-ketoisovalerate to form ketopantoate. The protein is 3-methyl-2-oxobutanoate hydroxymethyltransferase of Geotalea uraniireducens (strain Rf4) (Geobacter uraniireducens).